We begin with the raw amino-acid sequence, 373 residues long: Phospho-N-acetylmuramoyl-pentapeptide-transferase (373 aa).

The next 11 helical transmembrane spans lie at 16-36, 46-66, 93-113, 120-140, 157-177, 185-205, 216-236, 242-262, 270-290, 298-318, and 350-369; these read WWTK…AASF, LLSL…SWGI, PTMG…FVSV, QLLA…FDDW, LLLQ…QHWI, LGIS…VFLA, LDGL…VQLM, GNPV…GFLM, VFMG…VAIL, LVMG…VWVF, and MVVR…GLLL.

The protein belongs to the glycosyltransferase 4 family. MraY subfamily. Mg(2+) is required as a cofactor.

It localises to the cell inner membrane. The enzyme catalyses UDP-N-acetyl-alpha-D-muramoyl-L-alanyl-gamma-D-glutamyl-meso-2,6-diaminopimeloyl-D-alanyl-D-alanine + di-trans,octa-cis-undecaprenyl phosphate = di-trans,octa-cis-undecaprenyl diphospho-N-acetyl-alpha-D-muramoyl-L-alanyl-D-glutamyl-meso-2,6-diaminopimeloyl-D-alanyl-D-alanine + UMP. It participates in cell wall biogenesis; peptidoglycan biosynthesis. Its function is as follows. Catalyzes the initial step of the lipid cycle reactions in the biosynthesis of the cell wall peptidoglycan: transfers peptidoglycan precursor phospho-MurNAc-pentapeptide from UDP-MurNAc-pentapeptide onto the lipid carrier undecaprenyl phosphate, yielding undecaprenyl-pyrophosphoryl-MurNAc-pentapeptide, known as lipid I. This chain is Phospho-N-acetylmuramoyl-pentapeptide-transferase, found in Prochlorococcus marinus (strain MIT 9313).